Reading from the N-terminus, the 514-residue chain is Flagellin B (514 aa).

It belongs to the bacterial flagellin family. In terms of assembly, heteromer of FlaA and FlaB. FlaB is located proximal to the hook while the remainder of the filament is composed of the predominant FlaA.

It localises to the secreted. The protein resides in the bacterial flagellum. Functionally, flagellin is the subunit protein which polymerizes to form the filaments of bacterial flagella. Important for motility and virulence. In Helicobacter pylori (strain J99 / ATCC 700824) (Campylobacter pylori J99), this protein is Flagellin B (flaB).